The following is a 378-amino-acid chain: Tetraacyldisaccharide 4'-kinase (378 aa).

63–70 (AVGGAGKT) serves as a coordination point for ATP.

This sequence belongs to the LpxK family.

The catalysed reaction is a lipid A disaccharide + ATP = a lipid IVA + ADP + H(+). It participates in glycolipid biosynthesis; lipid IV(A) biosynthesis; lipid IV(A) from (3R)-3-hydroxytetradecanoyl-[acyl-carrier-protein] and UDP-N-acetyl-alpha-D-glucosamine: step 6/6. In terms of biological role, transfers the gamma-phosphate of ATP to the 4'-position of a tetraacyldisaccharide 1-phosphate intermediate (termed DS-1-P) to form tetraacyldisaccharide 1,4'-bis-phosphate (lipid IVA). This is Tetraacyldisaccharide 4'-kinase from Anaeromyxobacter sp. (strain K).